Here is a 180-residue protein sequence, read N- to C-terminus: MECPYCQNTSSRVLESRSTEAGQSIRRRRECLQCKHRFTTYERIEFVPISVLKKDKSKESFDRSKLLRGIVRACEKTEVSAQQIENVVEEIEARLQQSPRREITSQEIGQLVLQYLRELNEVAYIRFASVYGEFKGITDFVETLNQLQQEERESSSSPEWSDAGEEATVIEDSSQVMASS.

A zinc finger spans residues 3–34; sequence CPYCQNTSSRVLESRSTEAGQSIRRRRECLQC. The 91-residue stretch at 49–139 folds into the ATP-cone domain; sequence ISVLKKDKSK…VYGEFKGITD (91 aa). Positions 148–180 are disordered; that stretch reads QQEERESSSSPEWSDAGEEATVIEDSSQVMASS. Residues 171-180 show a composition bias toward polar residues; that stretch reads EDSSQVMASS.

This sequence belongs to the NrdR family. The cofactor is Zn(2+).

In terms of biological role, negatively regulates transcription of bacterial ribonucleotide reductase nrd genes and operons by binding to NrdR-boxes. The chain is Transcriptional repressor NrdR from Gloeothece citriformis (strain PCC 7424) (Cyanothece sp. (strain PCC 7424)).